We begin with the raw amino-acid sequence, 845 residues long: Prickle-like protein 2 (845 aa).

Residues 18 to 126 (FDFQRSSTSD…NVRPFPVTMT (109 aa)) enclose the PET domain. Position 92 is a phosphoserine (S92). LIM zinc-binding domains are found at residues 128 to 193 (AICE…CLKP), 193 to 253 (PRCA…LYAE), and 253 to 317 (EYCD…EDPN). Disordered regions lie at residues 314 to 346 (EDPN…NKGK) and 483 to 546 (YSDM…GSME). A compositionally biased stretch (polar residues) spans 318–327 (GSDSSDSAFQ). S319, S321, and S322 each carry phosphoserine. A phosphothreonine mark is found at T535, T537, and T540. Phosphoserine occurs at positions 544 and 547. The segment at 558–581 (AEGGAKRQEHLSRFSMPDLSKDSG) is disordered. 2 positions are modified to phosphoserine: S608 and S643. The segment at 642–700 (QSFDFDGGIASSKLPGQEGVHIQPMSERTRRRTTSRDDNRRFRPHRSRRSRRSRSDNAL) is disordered. The span at 683–693 (FRPHRSRRSRR) shows a compositional bias: basic residues. The residue at position 732 (S732) is a Phosphoserine. The segment at 823–845 (STLGGRGQLHSRKRQKSKNCIIS) is disordered. C842 carries the cysteine methyl ester modification. C842 is lipidated: S-farnesyl cysteine. Residues 843-845 (IIS) constitute a propeptide, removed in mature form.

Belongs to the prickle / espinas / testin family. As to expression, expressed in the hippocampus and cerebral cortex.

It is found in the nucleus membrane. The chain is Prickle-like protein 2 (Prickle2) from Mus musculus (Mouse).